The primary structure comprises 137 residues: Fluoride-specific ion channel FluC 1 (137 aa).

The next 4 helical transmembrane spans lie at 4-24 (LIYI…YYLG), 37-57 (LATL…TTYI), 67-87 (VITG…TFSV), and 98-118 (WGIA…MSGL). Positions 77 and 80 each coordinate Na(+).

Belongs to the fluoride channel Fluc/FEX (TC 1.A.43) family.

It is found in the cell membrane. The enzyme catalyses fluoride(in) = fluoride(out). With respect to regulation, na(+) is not transported, but it plays an essential structural role and its presence is essential for fluoride channel function. In terms of biological role, fluoride-specific ion channel. Important for reducing fluoride concentration in the cell, thus reducing its toxicity. This is Fluoride-specific ion channel FluC 1 from Bacillus cereus (strain ZK / E33L).